We begin with the raw amino-acid sequence, 105 residues long: Heat shock protein HspQ (105 aa).

Residues 84-105 are disordered; it reads QPKLDELSASIKKQLKTPRLRN. The span at 96–105 shows a compositional bias: basic residues; the sequence is KQLKTPRLRN.

It belongs to the HspQ family.

The protein resides in the cytoplasm. In terms of biological role, involved in the degradation of certain denaturated proteins, including DnaA, during heat shock stress. This chain is Heat shock protein HspQ, found in Wigglesworthia glossinidia brevipalpis.